Reading from the N-terminus, the 262-residue chain is Ornithine carbamoyltransferase (262 aa).

Residues 3–7 (STRTR), Gln-30, Arg-54, and 81–84 (HPTQ) contribute to the carbamoyl phosphate site. L-ornithine is bound by residues Asn-114, Asp-178, and 182–183 (SM). Residues 219-222 (HCLP) and Thr-247 each bind carbamoyl phosphate.

Belongs to the aspartate/ornithine carbamoyltransferase superfamily. OTCase family.

Its subcellular location is the cytoplasm. The enzyme catalyses carbamoyl phosphate + L-ornithine = L-citrulline + phosphate + H(+). It participates in amino-acid biosynthesis; L-arginine biosynthesis; L-arginine from L-ornithine and carbamoyl phosphate: step 1/3. Its pathway is amino-acid degradation; L-arginine degradation via ADI pathway; carbamoyl phosphate from L-arginine: step 2/2. Its function is as follows. Reversibly catalyzes the transfer of the carbamoyl group from carbamoyl phosphate (CP) to the N(epsilon) atom of ornithine (ORN) to produce L-citrulline. The polypeptide is Ornithine carbamoyltransferase (argF) (Neisseria meningitidis).